The following is a 315-amino-acid chain: Protoheme IX farnesyltransferase (315 aa).

9 consecutive transmembrane segments (helical) span residues 32-52, 53-73, 93-113, 120-140, 153-173, 180-200, 226-246, 249-269, and 295-315; these read VMSL…GHMN, PVLA…SGAL, IPAG…LSAF, LMVN…YAVI, IVIG…AATG, LVLF…LSLF, ALFY…MGFA, FYGV…WRLW, and IFAV…FGVF.

This sequence belongs to the UbiA prenyltransferase family. Protoheme IX farnesyltransferase subfamily.

The protein resides in the cell inner membrane. It catalyses the reaction heme b + (2E,6E)-farnesyl diphosphate + H2O = Fe(II)-heme o + diphosphate. It participates in porphyrin-containing compound metabolism; heme O biosynthesis; heme O from protoheme: step 1/1. Its function is as follows. Converts heme B (protoheme IX) to heme O by substitution of the vinyl group on carbon 2 of heme B porphyrin ring with a hydroxyethyl farnesyl side group. This is Protoheme IX farnesyltransferase from Brucella canis (strain ATCC 23365 / NCTC 10854 / RM-666).